We begin with the raw amino-acid sequence, 2219 residues long: MDEDDNLSNADISIDDEEVVREQTHHPPMQEDQELDNEDGSSDVDLSSVYVVPPIVSAPSPASVRIAGGSTIGGGGVAAGAVPTTTDNSHSPFHDWDSSVAAAAAPPPPPPRTGPTTTTSSGTAAESGAASALSDDAGAKPSFFFGASSFSLRSRKEVAALINTECCRGSPTPDLDSIMDTLFNPGTPIDNLDNIEWIRWLIAGGRTPQEFVKIVRSYDNHAKCGLVWVPHVVAYRCRTCGISPCMSICRDCFKKGNHTNHDFNMFLSQAGGACDCGDTSVMKAEGFCSDHGINNRVNRDPVPNNLLAVAEAIMPKLLFRLLQHFREHSDTPLEVQAITSYSCEEFANMLIDLNNMGEIMRKVMTRTLINPEVYAFFMEAPCQDTRNGRFLKANREKYEDAVNRFPNPEPPDEYRDLPALGDKLVHTTLLEEFIFWTFKFEFPQTLVCFLLNMLPDQDYKEHLTRTFVMHYSRIPSVLEMSRDPDTLSNRVVHMSVQLFSNESLALKMVNELSLLHVMIISLKLMMSKILIQNTLHDPNKNFHFVIDCTRQVMKDHCYWPLVSDFNNVLSHESVALVFLRDDNLIDMWFQFLQMLQGMNVNVRETASHVEFEPNSYYAAFSCELEASAYPMWSIISHLQDGTHAHLAKKIINYCVTTLHEWLDSIYFMEARLSMEEMMQASFHFPLHRYLAAFVCQAVTKMGISLNDVLPSRPYLLPLLMIHPLRVQSFFYEILAGKWVRNGLQIKGQAMTYIQANFCNSMADMDLFFLQICATNLPQYFFLQNTIELFDVGQWLETAPLKQPQKAEQSSMLEGFLTFLATLVTSRTNLGNDEATQCIIEISALLATENKTHSQLLELMPERSGNVHTKNFETFLKKLSVYKAPSSGSENLEQGLFTPIDEVWEKHYDPLHVLLRAVHRRDFQSSLDRFTNYVKSKDKMPASGNLWPPFRLPHALPATSSFSDPCKILNSRIFHSTILSIFFRAVHTRDVSEHLLALAVFLLEIAVETSDDVGSGTGDRAPPALAAVVESSSGPGYHGYGTGRHEPPKLFHCYPTDNLSCNLRHVVKKVSLKSRDPQVITSSYRSNPFYSDLDFEVEADPEQSMRMIGQGDPEGDEATGGAGLGMGAHSRRNVSQALVPMRVPGMEVALPPDLSVVAETGVVIRQDSNEDDLLREGNHAMDMSPPAALDFHFPLQQITLPESGMEVAIRRDLLLAETNNMGAIAGGAGGGANASATPPAGASNEMFSPTTPTGSGMLLPFQRVQPVAVPSSGNMDIVPSNAMGAGGSFTSGVSGSGTGRRMNYETGGARKRSVDIAIGGSNKDELHLDESILSLLLKLHSQLSGTLDSFSLSDGEDQSSDDDSTMDVDCNEASTSMAAAESTALAERGRSKRNYKNIHVSSSRIGDGPFFIGNLLRKIAKQDEQCAQSIDDIRARLWPNQREKQAEAKAREAKEKEERRKKARERQQKMMQDFANKQKLFMQSAAASSSGMGYGPEDEDDEELYEEQPREKEYDCIICNCTTPSTESNPIGLVVLVESSGIVGHRRRIAERLPLPINAEDESRLAHTTRLAAEFNRRTELLSLKFGDESWYLSNNMAYDNGVHVQSCGHHVHLSCLEAYLKTLYTTQRQPVQDRGEFYCPVCRQLSNSVLPLSPQLDRPTHLVRSGNQPFERLVADLTDLIKENETIPQPTKLTEAMGHAMEVMTNIAQRKVKCSSITFRKLFIFVTSIARTNLEAEIIQRGGSLCTANATRYKPKRECIVPLLHVLSVHVRVLVEWPLWSSWASLAGLPVTATEPLPAHCLELIPSILADPIALLLKFILLAPLQLDQDYFTCMVKVMYNLLYYQIVVQLCVTLTDLECDHIVKVYGSTSVGSDNSAAESQQQESAAGTTNNRRRAGQQQQSSSQLGKAMALVLSQTNDLVHLRRDCIPSTSSSAAASAAGSSSTTSTNHGASAATASSATTIEVNLKSMELQLQALCLPFLRVAALLRQHLYRHEMPEISAPGLEFVRLVYYLELVTDSMDWDCFNASKGLCFIPGTETTLPQFWCQQLMEVRPPADTVRELVLINQHSLWQQPRLLELPREYERLFTYYHERPCLNCYKVPKESSICLLCGTIVCLKQNCCAENDCCEAVRHTLSCGGGIGIFLVVTSTYIIVIRGRRACLWGSLYLDDFDEEDRDLKRGKPLYLSKDRFNLLESQWLSHKFAHTKHTWVFHRDLL.

2 disordered regions span residues 1–48 (MDED…DLSS) and 78–134 (AAGA…SALS). A compositionally biased stretch (basic and acidic residues) spans 20–29 (VREQTHHPPM). Acidic residues predominate over residues 31-42 (EDQELDNEDGSS). Low complexity predominate over residues 114–134 (GPTTTTSSGTAAESGAASALS). Residues 222–293 (AKCGLVWVPH…AEGFCSDHGI (72 aa)) form a UBR-type zinc finger. Disordered regions lie at residues 1348–1367 (SFSL…TMDV) and 1440–1464 (QREK…KARE). Acidic residues predominate over residues 1353-1367 (DGEDQSSDDDSTMDV). The RING-type; degenerate zinc finger occupies 1607 to 1643 (CGHHVHLSCLEAYLKTLYTTQRQPVQDRGEFYCPVCR). Disordered stretches follow at residues 1872 to 1902 (VGSD…QQQQ) and 1935 to 1954 (SAAA…HGAS). Residues 1877–1888 (SAAESQQQESAA) are compositionally biased toward low complexity.

Belongs to the E3 ubiquitin-protein ligase UBR1-like family. As to quaternary structure, selectively interacts (via UBR-type zinc finger) with the cleaved form of Diap1; this interaction is enhanced by tal. Interacts with tal and Rrp1. Interacts with ovo isoform B (via N-terminus). Interacts with Cad99C (via the cytoplasmic domain). Interacts with ck and Sans. Interacts with cos (via Kinesin motor domain). Post-translationally, in vitro, self-ubiquitination in the presence of E1, E2 and ubiquitin.

The protein resides in the cytoplasm. Its subcellular location is the nucleus. The catalysed reaction is S-ubiquitinyl-[E2 ubiquitin-conjugating enzyme]-L-cysteine + [acceptor protein]-L-lysine = [E2 ubiquitin-conjugating enzyme]-L-cysteine + N(6)-ubiquitinyl-[acceptor protein]-L-lysine.. It functions in the pathway protein modification; protein ubiquitination. Its function is as follows. E3 ubiquitin-protein ligase which is a component of the N-end rule pathway. Recognizes and binds to proteins bearing specific N-terminal residues, leading to their ubiquitination and subsequent degradation. Binds to the E3 ubiquitin-protein ligase Diap1 and enhances its ubiquitination and anti-apoptotic functions. Essential during trichome development for the ubiquitination of the N-terminus of ovo isoform B (svb), converting it from a transcriptional inhibitor to an activator. Positively regulates a hh-signaling pathway which functions in photoreceptor differentiation. Activation of hh up-regulates transcription of Ubr3, which in turn promotes hh signaling by mediating the ubiquitination and degradation of cos. Necessary for auditory transduction: plays a role in Johnston's organ organization by acting in the regulation of zip and ck function in scolopidial apical attachment. Likely to function by acting in a pathway that negatively regulates the ubiquitination of zip, consequently affecting its interaction with ck. May also negatively regulate a component of the SCF (SKP1-CUL1-F-box protein) E3 ubiquitin-protein ligase complex Cul1, which also appears to function in the negative regulation of the zip-ck interaction and scolopidial apical attachment. The polypeptide is E3 ubiquitin-protein ligase Ubr3 (Drosophila melanogaster (Fruit fly)).